A 230-amino-acid chain; its full sequence is MPKLVLLRHGQSIWNLENRFTGWYDVDLSDQGINEAREAGVALREAGIAPQVAYTSVLKRAIRTLWLSLAELDRMWIPEIKDWRLNERHYGALTGLNKAETAEQYGDEQVHIWRRSYDTPPPALDAEDERHPRHDPRYAGLDPQQLPGTESLKLTLERVLPCWEGEIAPALRQHDCVLIAAHGNSLRALVKHLDGLADDAIMKVEIPTGRPLVYELAEDLSVQRSYYVQD.

Substrate is bound by residues 8–15 (RHGQSIWN), 21–22 (TG), arginine 60, 87–90 (ERHY), lysine 98, and 114–115 (RR). Histidine 9 serves as the catalytic Tele-phosphohistidine intermediate. The Proton donor/acceptor role is filled by glutamate 87. Positions 117-143 (YDTPPPALDAEDERHPRHDPRYAGLDP) are disordered. Basic and acidic residues predominate over residues 128–137 (DERHPRHDPR). A substrate-binding site is contributed by 183–184 (GN).

This sequence belongs to the phosphoglycerate mutase family. BPG-dependent PGAM subfamily. As to quaternary structure, homodimer.

The enzyme catalyses (2R)-2-phosphoglycerate = (2R)-3-phosphoglycerate. The protein operates within carbohydrate degradation; glycolysis; pyruvate from D-glyceraldehyde 3-phosphate: step 3/5. Its function is as follows. Catalyzes the interconversion of 2-phosphoglycerate and 3-phosphoglycerate. The polypeptide is 2,3-bisphosphoglycerate-dependent phosphoglycerate mutase (Halorhodospira halophila (strain DSM 244 / SL1) (Ectothiorhodospira halophila (strain DSM 244 / SL1))).